Here is a 306-residue protein sequence, read N- to C-terminus: Glutaminase (306 aa).

Substrate-binding residues include S64, N115, E159, N166, Y190, Y242, and V260.

The protein belongs to the glutaminase family. In terms of assembly, homotetramer.

It catalyses the reaction L-glutamine + H2O = L-glutamate + NH4(+). The polypeptide is Glutaminase (Vibrio vulnificus (strain YJ016)).